A 278-amino-acid chain; its full sequence is MTNQAPIPVIVNGAAGKMGREVVKAIAQAPDLNLLGAIDSSPEHQGKDAGELAGLSEPLEVPITNQLEPMLGYVAGERQGPPGVIVDFTHPDSVYDNVRSAIAYGIRPVVGTTGLSPAQIQNLADFAEKASTGCLIIPNFSIGMVLLQQAAVTASQYFDHVEIIELHHNQKADAPSGTAIQTAELLAELGKTFNSAIVEETEKIPGARGSLAGEGIRIHSVRLPGLIAHQEVIFGAPGQIYTLRHDTSDRACYMPGVLLAIRKVLQLKSLVYGLEKIL.

Residues 13–18 (GAAGKM) and 111–113 (GTT) contribute to the NAD(+) site. The active-site Proton donor/acceptor is the His167. Residue His168 coordinates (S)-2,3,4,5-tetrahydrodipicolinate. Lys171 acts as the Proton donor in catalysis. Residue 177-178 (GT) coordinates (S)-2,3,4,5-tetrahydrodipicolinate.

Belongs to the DapB family.

The protein localises to the cytoplasm. The catalysed reaction is (S)-2,3,4,5-tetrahydrodipicolinate + NAD(+) + H2O = (2S,4S)-4-hydroxy-2,3,4,5-tetrahydrodipicolinate + NADH + H(+). The enzyme catalyses (S)-2,3,4,5-tetrahydrodipicolinate + NADP(+) + H2O = (2S,4S)-4-hydroxy-2,3,4,5-tetrahydrodipicolinate + NADPH + H(+). Its pathway is amino-acid biosynthesis; L-lysine biosynthesis via DAP pathway; (S)-tetrahydrodipicolinate from L-aspartate: step 4/4. Functionally, catalyzes the conversion of 4-hydroxy-tetrahydrodipicolinate (HTPA) to tetrahydrodipicolinate. This Trichormus variabilis (strain ATCC 29413 / PCC 7937) (Anabaena variabilis) protein is 4-hydroxy-tetrahydrodipicolinate reductase.